A 424-amino-acid polypeptide reads, in one-letter code: Glutamyl-tRNA reductase (424 aa).

Residues 51–54 (TCNR), Ser99, 104–106 (EDQ), and Gln110 contribute to the substrate site. Residue Cys52 is the Nucleophile of the active site. Residue 179–184 (GGGEMG) coordinates NADP(+).

The protein belongs to the glutamyl-tRNA reductase family. Homodimer.

It catalyses the reaction (S)-4-amino-5-oxopentanoate + tRNA(Glu) + NADP(+) = L-glutamyl-tRNA(Glu) + NADPH + H(+). It functions in the pathway porphyrin-containing compound metabolism; protoporphyrin-IX biosynthesis; 5-aminolevulinate from L-glutamyl-tRNA(Glu): step 1/2. In terms of biological role, catalyzes the NADPH-dependent reduction of glutamyl-tRNA(Glu) to glutamate 1-semialdehyde (GSA). This chain is Glutamyl-tRNA reductase, found in Methanocorpusculum labreanum (strain ATCC 43576 / DSM 4855 / Z).